A 197-amino-acid chain; its full sequence is Phosphoheptose isomerase (197 aa).

One can recognise an SIS domain in the interval 34-196 (MVQCLLGGNK…DRTLFPQDEQ (163 aa)). 49-51 (NGG) is a binding site for substrate. Positions 58 and 62 each coordinate Zn(2+). Substrate-binding positions include glutamate 62, 91–92 (ND), 117–119 (STS), serine 122, and glutamine 172. Glutamine 172 and histidine 180 together coordinate Zn(2+).

The protein belongs to the SIS family. GmhA subfamily. Homotetramer. Zn(2+) is required as a cofactor.

The protein localises to the cytoplasm. The enzyme catalyses 2 D-sedoheptulose 7-phosphate = D-glycero-alpha-D-manno-heptose 7-phosphate + D-glycero-beta-D-manno-heptose 7-phosphate. Its pathway is carbohydrate biosynthesis; D-glycero-D-manno-heptose 7-phosphate biosynthesis; D-glycero-alpha-D-manno-heptose 7-phosphate and D-glycero-beta-D-manno-heptose 7-phosphate from sedoheptulose 7-phosphate: step 1/1. Catalyzes the isomerization of sedoheptulose 7-phosphate in D-glycero-D-manno-heptose 7-phosphate. The sequence is that of Phosphoheptose isomerase from Shewanella oneidensis (strain ATCC 700550 / JCM 31522 / CIP 106686 / LMG 19005 / NCIMB 14063 / MR-1).